Consider the following 932-residue polypeptide: Protocadherin gamma-A3 (932 aa).

The signal sequence occupies residues 1 to 29 (MTNCLSFRNGRGLALLCALLGTLCETGSG). 6 consecutive Cadherin domains span residues 30–133 (QIRY…APNF), 134–242 (PTEE…PPMF), 243–347 (TQPE…APEI), 348–452 (TITS…PPTF), 453–562 (PHLS…APEI), and 570–682 (DGST…EPSA). The Extracellular segment spans residues 30 to 692 (QIRYSVSEEL…KPNDSDLTLY (663 aa)). 3 N-linked (GlcNAc...) asparagine glycosylation sites follow: Asn-265, Asn-419, and Asn-545. A glycan (N-linked (GlcNAc...) asparagine) is linked at Asn-685. Residues 693 to 713 (LVVAVAAVSCVFLALVIVLLA) form a helical membrane-spanning segment. Topologically, residues 714 to 932 (HRLRRWHKSR…KKKSGKKEKK (219 aa)) are cytoplasmic. Disordered stretches follow at residues 806 to 841 (LLQQAPPNTDWRFSQAQRPGTSGSQNGDDTGTWPNN) and 902 to 932 (ATLTNAAGKRDGKAPAGGNGNKKKSGKKEKK). Residues 922–932 (NKKKSGKKEKK) show a composition bias toward basic residues.

The protein resides in the cell membrane. Functionally, potential calcium-dependent cell-adhesion protein. May be involved in the establishment and maintenance of specific neuronal connections in the brain. The polypeptide is Protocadherin gamma-A3 (PCDHGA3) (Pan troglodytes (Chimpanzee)).